The chain runs to 194 residues: Transcriptional repressor NrdR (194 aa).

A zinc finger spans residues 3–33 (CPFCGHADDRVLDTRVQKDGSIRRRRECLEC). One can recognise an ATP-cone domain in the interval 48-138 (PFIIKKDGRR…VYRTFKDVQE (91 aa)). Residues 168–179 (ESEKSTNHETDS) show a composition bias toward basic and acidic residues. Positions 168-194 (ESEKSTNHETDSKTPSPRTRPPGPLSN) are disordered. A compositionally biased stretch (pro residues) spans 185-194 (RTRPPGPLSN).

The protein belongs to the NrdR family. Zn(2+) is required as a cofactor.

Negatively regulates transcription of bacterial ribonucleotide reductase nrd genes and operons by binding to NrdR-boxes. The sequence is that of Transcriptional repressor NrdR from Bdellovibrio bacteriovorus (strain ATCC 15356 / DSM 50701 / NCIMB 9529 / HD100).